A 334-amino-acid chain; its full sequence is Tryptophan--tRNA ligase (334 aa).

Residues 11–13 (QPS) and 19–20 (GN) each bind ATP. The 'HIGH' region signature appears at 12–20 (PSGELTIGN). Asp-135 contributes to the L-tryptophan binding site. Residues 147 to 149 (GED), Val-186, and 195 to 199 (KMSKS) each bind ATP. The 'KMSKS' region motif lies at 195–199 (KMSKS).

This sequence belongs to the class-I aminoacyl-tRNA synthetase family. Homodimer.

The protein resides in the cytoplasm. The catalysed reaction is tRNA(Trp) + L-tryptophan + ATP = L-tryptophyl-tRNA(Trp) + AMP + diphosphate + H(+). In terms of biological role, catalyzes the attachment of tryptophan to tRNA(Trp). In Shigella flexneri, this protein is Tryptophan--tRNA ligase.